A 1553-amino-acid polypeptide reads, in one-letter code: Probable serine/threonine-protein kinase qkgA (1553 aa).

The disordered stretch occupies residues 113 to 142 (SSSSSSSSTSSSPSLTSSPSSPISTSPPYH). LRR repeat units lie at residues 287–309 (NGTF…INMC), 311–333 (QLVE…TELK), 334–356 (FLKN…CNLT), and 357–378 (LLKV…IVEL). The 225-residue stretch at 395-619 (SCETWNKVKL…KRLIHESEKS (225 aa)) folds into the Roc domain. Disordered stretches follow at residues 643 to 696 (NQGR…QQQQ), 955 to 1019 (ISNS…PSSQ), and 1048 to 1090 (NQNG…NNNK). Low complexity-rich tracts occupy residues 648–675 (SISN…TSKK), 683–696 (SQQQ…QQQQ), 956–1018 (SNST…SPSS), and 1059–1090 (TTTT…NNNK). In terms of domain architecture, COR spans 694–893 (QQQLQQSIKE…KTYWKDGVLL (200 aa)). The 305-residue stretch at 1242 to 1546 (ILYERQIGEG…QTSYFDSPFL (305 aa)) folds into the Protein kinase domain. ATP-binding positions include 1248 to 1256 (IGEGGFGLI) and Lys1271. Asp1393 serves as the catalytic Proton acceptor.

This sequence belongs to the protein kinase superfamily. TKL Ser/Thr protein kinase family. ROCO subfamily.

The enzyme catalyses L-seryl-[protein] + ATP = O-phospho-L-seryl-[protein] + ADP + H(+). It catalyses the reaction L-threonyl-[protein] + ATP = O-phospho-L-threonyl-[protein] + ADP + H(+). Involved in growth, and during development, in aggregation. The sequence is that of Probable serine/threonine-protein kinase qkgA (qkgA-1) from Dictyostelium discoideum (Social amoeba).